The following is a 215-amino-acid chain: UPF0502 protein CKO_01995 (215 aa).

The protein belongs to the UPF0502 family.

This Citrobacter koseri (strain ATCC BAA-895 / CDC 4225-83 / SGSC4696) protein is UPF0502 protein CKO_01995.